A 259-amino-acid chain; its full sequence is Proteasome subunit alpha (259 aa).

Belongs to the peptidase T1A family. In terms of assembly, the 20S proteasome core is composed of 14 alpha and 14 beta subunits that assemble into four stacked heptameric rings, resulting in a barrel-shaped structure. The two inner rings, each composed of seven catalytic beta subunits, are sandwiched by two outer rings, each composed of seven alpha subunits. The catalytic chamber with the active sites is on the inside of the barrel. Has a gated structure, the ends of the cylinder being occluded by the N-termini of the alpha-subunits. Is capped at one or both ends by the proteasome regulatory ATPase, PAN.

It is found in the cytoplasm. With respect to regulation, the formation of the proteasomal ATPase PAN-20S proteasome complex, via the docking of the C-termini of PAN into the intersubunit pockets in the alpha-rings, triggers opening of the gate for substrate entry. Interconversion between the open-gate and close-gate conformations leads to a dynamic regulation of the 20S proteasome proteolysis activity. Functionally, component of the proteasome core, a large protease complex with broad specificity involved in protein degradation. This chain is Proteasome subunit alpha, found in Methanococcus vannielii (strain ATCC 35089 / DSM 1224 / JCM 13029 / OCM 148 / SB).